The primary structure comprises 647 residues: Exoribonuclease 2 (647 aa).

The 329-residue stretch at 192 to 520 (REDLTALSFV…NHRLLKAIIS (329 aa)) folds into the RNB domain. The S1 motif domain occupies 565 to 647 (ESTFNAEIID…ETRNIVARPI (83 aa)).

It belongs to the RNR ribonuclease family. RNase II subfamily.

It localises to the cytoplasm. It catalyses the reaction Exonucleolytic cleavage in the 3'- to 5'-direction to yield nucleoside 5'-phosphates.. In terms of biological role, involved in mRNA degradation. Hydrolyzes single-stranded polyribonucleotides processively in the 3' to 5' direction. In Proteus mirabilis (strain HI4320), this protein is Exoribonuclease 2.